Reading from the N-terminus, the 276-residue chain is Small ribosomal subunit protein uS2 (276 aa).

This sequence belongs to the universal ribosomal protein uS2 family.

This Chlamydia caviae (strain ATCC VR-813 / DSM 19441 / 03DC25 / GPIC) (Chlamydophila caviae) protein is Small ribosomal subunit protein uS2.